Reading from the N-terminus, the 564-residue chain is Dihydroxy-acid dehydratase (564 aa).

Position 80 (aspartate 80) interacts with Mg(2+). Cysteine 121 contacts [2Fe-2S] cluster. Residues aspartate 122 and lysine 123 each coordinate Mg(2+). An N6-carboxylysine modification is found at lysine 123. Residue cysteine 194 coordinates [2Fe-2S] cluster. Position 447 (glutamate 447) interacts with Mg(2+). Serine 473 serves as the catalytic Proton acceptor.

This sequence belongs to the IlvD/Edd family. Homodimer. [2Fe-2S] cluster is required as a cofactor. Requires Mg(2+) as cofactor.

The catalysed reaction is (2R)-2,3-dihydroxy-3-methylbutanoate = 3-methyl-2-oxobutanoate + H2O. It carries out the reaction (2R,3R)-2,3-dihydroxy-3-methylpentanoate = (S)-3-methyl-2-oxopentanoate + H2O. It participates in amino-acid biosynthesis; L-isoleucine biosynthesis; L-isoleucine from 2-oxobutanoate: step 3/4. Its pathway is amino-acid biosynthesis; L-valine biosynthesis; L-valine from pyruvate: step 3/4. Its function is as follows. Functions in the biosynthesis of branched-chain amino acids. Catalyzes the dehydration of (2R,3R)-2,3-dihydroxy-3-methylpentanoate (2,3-dihydroxy-3-methylvalerate) into 2-oxo-3-methylpentanoate (2-oxo-3-methylvalerate) and of (2R)-2,3-dihydroxy-3-methylbutanoate (2,3-dihydroxyisovalerate) into 2-oxo-3-methylbutanoate (2-oxoisovalerate), the penultimate precursor to L-isoleucine and L-valine, respectively. The chain is Dihydroxy-acid dehydratase from Listeria monocytogenes serotype 4a (strain HCC23).